Reading from the N-terminus, the 234-residue chain is Phosphoribosylaminoimidazole-succinocarboxamide synthase (234 aa).

This sequence belongs to the SAICAR synthetase family.

It catalyses the reaction 5-amino-1-(5-phospho-D-ribosyl)imidazole-4-carboxylate + L-aspartate + ATP = (2S)-2-[5-amino-1-(5-phospho-beta-D-ribosyl)imidazole-4-carboxamido]succinate + ADP + phosphate + 2 H(+). Its pathway is purine metabolism; IMP biosynthesis via de novo pathway; 5-amino-1-(5-phospho-D-ribosyl)imidazole-4-carboxamide from 5-amino-1-(5-phospho-D-ribosyl)imidazole-4-carboxylate: step 1/2. The protein is Phosphoribosylaminoimidazole-succinocarboxamide synthase of Streptococcus pyogenes serotype M1.